Consider the following 54-residue polypeptide: Sec-independent protein translocase protein TatA (54 aa).

Residues 1–21 form a helical membrane-spanning segment; the sequence is MGMSFSHLLIVLLIIFVLFGA.

The protein belongs to the TatA/E family. In terms of assembly, the Tat system comprises two distinct complexes: a TatABC complex, containing multiple copies of TatA, TatB and TatC subunits, and a separate TatA complex, containing only TatA subunits. Substrates initially bind to the TatABC complex, which probably triggers association of the separate TatA complex to form the active translocon.

Its subcellular location is the cell inner membrane. Functionally, part of the twin-arginine translocation (Tat) system that transports large folded proteins containing a characteristic twin-arginine motif in their signal peptide across membranes. TatA could form the protein-conducting channel of the Tat system. This chain is Sec-independent protein translocase protein TatA, found in Rickettsia canadensis (strain McKiel).